A 207-amino-acid polypeptide reads, in one-letter code: Large ribosomal subunit protein uL4 (207 aa).

The tract at residues 53 to 76 is disordered; sequence NRSAVRGGGRKPWRQKGTGRARQG. Residues 60 to 71 show a composition bias toward basic residues; that stretch reads GGRKPWRQKGTG.

This sequence belongs to the universal ribosomal protein uL4 family. Part of the 50S ribosomal subunit.

Functionally, one of the primary rRNA binding proteins, this protein initially binds near the 5'-end of the 23S rRNA. It is important during the early stages of 50S assembly. It makes multiple contacts with different domains of the 23S rRNA in the assembled 50S subunit and ribosome. In terms of biological role, forms part of the polypeptide exit tunnel. The polypeptide is Large ribosomal subunit protein uL4 (Staphylococcus saprophyticus subsp. saprophyticus (strain ATCC 15305 / DSM 20229 / NCIMB 8711 / NCTC 7292 / S-41)).